We begin with the raw amino-acid sequence, 386 residues long: Succinate--CoA ligase [ADP-forming] subunit beta (386 aa).

The region spanning 9-244 (KEILRKYGVP…HDEEDPLETR (236 aa)) is the ATP-grasp domain. ATP is bound by residues Lys46, 53-55 (GRG), Glu99, Cys102, and Glu107. The Mg(2+) site is built by Asn199 and Asp213. Substrate contacts are provided by residues Asn264 and 321–323 (GIM).

It belongs to the succinate/malate CoA ligase beta subunit family. Heterotetramer of two alpha and two beta subunits. Mg(2+) is required as a cofactor.

It carries out the reaction succinate + ATP + CoA = succinyl-CoA + ADP + phosphate. The enzyme catalyses GTP + succinate + CoA = succinyl-CoA + GDP + phosphate. It functions in the pathway carbohydrate metabolism; tricarboxylic acid cycle; succinate from succinyl-CoA (ligase route): step 1/1. Functionally, succinyl-CoA synthetase functions in the citric acid cycle (TCA), coupling the hydrolysis of succinyl-CoA to the synthesis of either ATP or GTP and thus represents the only step of substrate-level phosphorylation in the TCA. The beta subunit provides nucleotide specificity of the enzyme and binds the substrate succinate, while the binding sites for coenzyme A and phosphate are found in the alpha subunit. The polypeptide is Succinate--CoA ligase [ADP-forming] subunit beta (Rickettsia felis (strain ATCC VR-1525 / URRWXCal2) (Rickettsia azadi)).